Here is a 113-residue protein sequence, read N- to C-terminus: Transcriptional regulator RamA (113 aa).

The 99-residue stretch at 9–107 (DTIVEWIDDN…NLPPGAYRKE (99 aa)) folds into the HTH araC/xylS-type domain. 2 DNA-binding regions (H-T-H motif) span residues 26–47 (DDIA…MQYK) and 74–97 (VYDI…TRTF).

Functionally, transcriptional regulator. Binds to regulatory regions of target genes, including efflux pump operon acrAB and outer membrane protein gene tolC. Represses transcription of genes belonging to the flagellar regulon, including flhD, flhB and fliC; probably thereby leading to repression of motility. Represses expression of the flhDC operon in a post-transcriptional manner. Activates expression of acrAB, perhaps thereby conferring multidrug resistance. Involved in indole- and bile-mediated regulation of acrAB; binding of bile to RamA may contribute to activation of expression of acrAB. Plays a role in regulating virulence in mice. In Salmonella typhimurium (strain LT2 / SGSC1412 / ATCC 700720), this protein is Transcriptional regulator RamA.